A 429-amino-acid polypeptide reads, in one-letter code: Enolase 1 (429 aa).

Gln163 provides a ligand contact to (2R)-2-phosphoglycerate. The active-site Proton donor is Glu205. 3 residues coordinate Mg(2+): Asp242, Glu287, and Asp314. Residues Lys339, Arg368, Ser369, and Lys390 each coordinate (2R)-2-phosphoglycerate. The active-site Proton acceptor is Lys339.

The protein belongs to the enolase family. Mg(2+) is required as a cofactor.

It localises to the cytoplasm. The protein localises to the secreted. It is found in the cell surface. The enzyme catalyses (2R)-2-phosphoglycerate = phosphoenolpyruvate + H2O. It functions in the pathway carbohydrate degradation; glycolysis; pyruvate from D-glyceraldehyde 3-phosphate: step 4/5. Its function is as follows. Catalyzes the reversible conversion of 2-phosphoglycerate (2-PG) into phosphoenolpyruvate (PEP). It is essential for the degradation of carbohydrates via glycolysis. The protein is Enolase 1 of Cupriavidus metallidurans (strain ATCC 43123 / DSM 2839 / NBRC 102507 / CH34) (Ralstonia metallidurans).